A 314-amino-acid polypeptide reads, in one-letter code: Malate dehydrogenase (314 aa).

NAD(+)-binding positions include 11 to 16 (GSGNIG) and D35. Residues R84 and R90 each contribute to the substrate site. NAD(+)-binding positions include N97 and 120 to 122 (ITN). N122 and R153 together coordinate substrate. Catalysis depends on H177, which acts as the Proton acceptor.

It belongs to the LDH/MDH superfamily. MDH type 3 family.

It catalyses the reaction (S)-malate + NAD(+) = oxaloacetate + NADH + H(+). In terms of biological role, catalyzes the reversible oxidation of malate to oxaloacetate. This Rickettsia typhi (strain ATCC VR-144 / Wilmington) protein is Malate dehydrogenase.